We begin with the raw amino-acid sequence, 337 residues long: Phosphate acyltransferase (337 aa).

It belongs to the PlsX family. Homodimer. Probably interacts with PlsY.

The protein resides in the cytoplasm. The enzyme catalyses a fatty acyl-[ACP] + phosphate = an acyl phosphate + holo-[ACP]. It functions in the pathway lipid metabolism; phospholipid metabolism. Its function is as follows. Catalyzes the reversible formation of acyl-phosphate (acyl-PO(4)) from acyl-[acyl-carrier-protein] (acyl-ACP). This enzyme utilizes acyl-ACP as fatty acyl donor, but not acyl-CoA. This is Phosphate acyltransferase from Listeria innocua serovar 6a (strain ATCC BAA-680 / CLIP 11262).